The sequence spans 372 residues: Saccharopine dehydrogenase [NAD(+), L-lysine-forming] (372 aa).

Residues Arg-17 and Lys-76 each coordinate L-saccharopine. The active-site Proton acceptor is Lys-76. Catalysis depends on His-95, which acts as the Proton donor. Gln-100 lines the L-saccharopine pocket. Arg-129 provides a ligand contact to NAD(+). Residues Arg-130 and Phe-134 each contribute to the L-saccharopine site. Residues 202 to 203 (GR), Asp-226, Thr-230, Tyr-250, and Val-277 each bind NAD(+). Residues Cys-204 and Cys-248 are joined by a disulfide bond. Residue 278–280 (SAD) coordinates L-saccharopine. 317 to 320 (IDHL) contacts NAD(+). The Microbody targeting signal motif lies at 370–372 (SKL).

Belongs to the AlaDH/PNT family. As to quaternary structure, monomer.

Its subcellular location is the peroxisome. It carries out the reaction L-saccharopine + NAD(+) + H2O = L-lysine + 2-oxoglutarate + NADH + H(+). It functions in the pathway amino-acid biosynthesis; L-lysine biosynthesis via AAA pathway; L-lysine from L-alpha-aminoadipate (fungal route): step 3/3. Catalyzes the NAD(+)-dependent cleavage of saccharopine to L-lysine and 2-oxoglutarate, the final step in the alpha-aminoadipate (AAA) pathway for lysin biosynthesis. The sequence is that of Saccharopine dehydrogenase [NAD(+), L-lysine-forming] (LYS1) from Candida glabrata (strain ATCC 2001 / BCRC 20586 / JCM 3761 / NBRC 0622 / NRRL Y-65 / CBS 138) (Yeast).